The chain runs to 491 residues: 3-octaprenyl-4-hydroxybenzoate carboxy-lyase (491 aa).

Asparagine 172 is a Mn(2+) binding site. Prenylated FMN contacts are provided by residues 175–177 (IYR), 189–191 (RWL), and 194–195 (RG). Position 238 (glutamate 238) interacts with Mn(2+). Catalysis depends on aspartate 287, which acts as the Proton donor.

The protein belongs to the UbiD family. As to quaternary structure, homohexamer. Requires prenylated FMN as cofactor. Mn(2+) is required as a cofactor.

It is found in the cell membrane. It carries out the reaction a 4-hydroxy-3-(all-trans-polyprenyl)benzoate + H(+) = a 2-(all-trans-polyprenyl)phenol + CO2. It functions in the pathway cofactor biosynthesis; ubiquinone biosynthesis. Functionally, catalyzes the decarboxylation of 3-octaprenyl-4-hydroxy benzoate to 2-octaprenylphenol, an intermediate step in ubiquinone biosynthesis. This Alcanivorax borkumensis (strain ATCC 700651 / DSM 11573 / NCIMB 13689 / SK2) protein is 3-octaprenyl-4-hydroxybenzoate carboxy-lyase.